The following is a 185-amino-acid chain: Segregation and condensation protein B (185 aa).

Belongs to the ScpB family. As to quaternary structure, homodimer. Homodimerization may be required to stabilize the binding of ScpA to the Smc head domains. Component of a cohesin-like complex composed of ScpA, ScpB and the Smc homodimer, in which ScpA and ScpB bind to the head domain of Smc. The presence of the three proteins is required for the association of the complex with DNA.

The protein localises to the cytoplasm. In terms of biological role, participates in chromosomal partition during cell division. May act via the formation of a condensin-like complex containing Smc and ScpA that pull DNA away from mid-cell into both cell halves. The chain is Segregation and condensation protein B from Carboxydothermus hydrogenoformans (strain ATCC BAA-161 / DSM 6008 / Z-2901).